Here is a 794-residue protein sequence, read N- to C-terminus: MGRSPASSCLRLISCSGGDDTSADPNSTALENKSSGDKRGWSFRKKSGKQRGLITSVVSETTPASRTRETLESALLKSPSPDNNNVSEKQQQSFSVDEKKSQLPVVTYVAEPVDEKKTQSVIEEKTELLSVEEQIDHRTEVSPVIVESKGTETEEDDLIGTELQGPSAADAAKIEEDVTSEVEMASKVEPEESESDDVIIVRKESDEKVDEKLDESVIVVIQAAVRGFLARRELLRSKKVIKLQAAVRGHLVRSQAMGSLRCVQAIVKMQAMVRARHSTKDGSRVSATSDKSEPNAAAQKLLENKFAKHLMESTPKTKPINIKCDPTKPSSAWNWLERWMSVPKPEKTSKANLTTEEQNLEETQNVKISPQADFVNSDSTVENKTETDMPSYEASKVEGQNVELSETEKMSQYDSPEASAEVYYDSIQSQPLAAKPDSLLEEPEYVDGQIKHSLKRKVSNPSFIAAQSKFEELTSSTGSNKAMTLSSKDDVLGEEGKTDIDSPDTTNTIKDHSLEDVTPAELSGSECGTELSVTSSLDTLEKKSDAEGAEPRVEAKLLEDDTFKTDQAELIEIDVKDATSMGTVEDPKEKVENAKDEVEISATHHEPVISTPDSKKRRAEDESGPQAYALSEGALTPMTITESQATPASQASSSVKARKGKSEKSGSSQKRKVSKKITSSPKQEIGTGEATEQEEGKEQKSGRRTSFGYDQEARESSGGKNSLPRFMQPTQSAKAKVQEHNSPRSSPDLQERDVVSAKKRHSLPGVTNGKQVSPRIQRSASQAQQGTKDRKWQR.

Residues 15–101 are disordered; sequence CSGGDDTSAD…QSFSVDEKKS (87 aa). 2 stretches are compositionally biased toward polar residues: residues 23 to 33 and 56 to 65; these read ADPNSTALENK and SVVSETTPAS. Serine 78, serine 80, serine 142, serine 193, and serine 195 each carry phosphoserine. Residues 80-95 show a composition bias toward polar residues; the sequence is SPDNNNVSEKQQQSFS. IQ domains follow at residues 214–242 and 243–265; these read DESV…KVIK and LQAA…CVQA. The calmodulin-binding stretch occupies residues 230–241; it reads ARRELLRSKKVI. Residues 277 to 296 are disordered; sequence HSTKDGSRVSATSDKSEPNA. Serine 369 carries the post-translational modification Phosphoserine. The tract at residues 375 to 417 is disordered; it reads VNSDSTVENKTETDMPSYEASKVEGQNVELSETEKMSQYDSPE. Serine 459 is modified (phosphoserine). Disordered regions lie at residues 472-555 and 578-794; these read ELTS…RVEA and ATSM…KWQR. Residues 473-486 show a composition bias toward polar residues; that stretch reads LTSSTGSNKAMTLS. Positions 487 to 500 are enriched in basic and acidic residues; it reads SKDDVLGEEGKTDI. Phosphoserine is present on residues serine 502 and serine 544. Basic and acidic residues-rich tracts occupy residues 539–555 and 585–607; these read TLEK…RVEA and EDPK…HHEP. The segment covering 643–654 has biased composition (low complexity); the sequence is SQATPASQASSS. Residues 657–664 carry the Nuclear localization signal motif; it reads ARKGKSEK. The segment covering 768-786 has biased composition (polar residues); that stretch reads NGKQVSPRIQRSASQAQQG.

This sequence belongs to the IQD family. In terms of assembly, binds to multiple calmodulin (CaM) in the presence of Ca(2+) and CaM-like proteins.

The protein localises to the nucleus. It localises to the cytoplasm. It is found in the cytoskeleton. Its function is as follows. May be involved in cooperative interactions with calmodulins or calmodulin-like proteins. Recruits calmodulin proteins to microtubules, thus being a potential scaffold in cellular signaling and trafficking. May associate with nucleic acids and regulate gene expression at the transcriptional or post-transcriptional level. The sequence is that of Protein IQ-DOMAIN 32 from Arabidopsis thaliana (Mouse-ear cress).